We begin with the raw amino-acid sequence, 631 residues long: Chaperone protein DnaK (631 aa).

Phosphothreonine; by autocatalysis is present on T198. The disordered stretch occupies residues 598–631 (YSAQQGGEQPGAAKKDDVVDAEFTEVDDDKKKSA).

Belongs to the heat shock protein 70 family.

Its function is as follows. Acts as a chaperone. This is Chaperone protein DnaK from Azorhizobium caulinodans (strain ATCC 43989 / DSM 5975 / JCM 20966 / LMG 6465 / NBRC 14845 / NCIMB 13405 / ORS 571).